Consider the following 294-residue polypeptide: MTIRLLGRTEIRRLAKDIDFRPRKSFGQNFVHDANTVRRIVSASGVHRHDHVLEVGPGLGSLTLALLDRGAHVTAVEIDPLLAQQLPTTIADHSHSEINRLTVLNQDILTLMPSDLENQPTALVANLPYNVAVPALLHLLAEFPTIRSVMVMVQAEVAERLAADPGGKDYGVPSAKVRFYGNVRRYGMVSPTVFWPIPRVYSGLVRIDRYETSPWPTDADFRAQVFDLIDIAFAQRRKTSRNAFAEWAGSGNESARRLLAASIDPSRRGETLAIADFVRLLQRSGEAEEQVRVQ.

Positions 29, 31, 56, 77, 107, and 126 each coordinate S-adenosyl-L-methionine.

The protein belongs to the class I-like SAM-binding methyltransferase superfamily. rRNA adenine N(6)-methyltransferase family. RsmA subfamily.

Its subcellular location is the cytoplasm. It catalyses the reaction adenosine(1518)/adenosine(1519) in 16S rRNA + 4 S-adenosyl-L-methionine = N(6)-dimethyladenosine(1518)/N(6)-dimethyladenosine(1519) in 16S rRNA + 4 S-adenosyl-L-homocysteine + 4 H(+). Specifically dimethylates two adjacent adenosines (A1518 and A1519) in the loop of a conserved hairpin near the 3'-end of 16S rRNA in the 30S particle. May play a critical role in biogenesis of 30S subunits. The protein is Ribosomal RNA small subunit methyltransferase A of Mycobacterium sp. (strain JLS).